The primary structure comprises 234 residues: Ribose-5-phosphate isomerase A (234 aa).

Substrate contacts are provided by residues 34-37, 90-93, and 103-106; these read TGST, DGAD, and KGGG. Glu-112 serves as the catalytic Proton acceptor. Lys-130 serves as a coordination point for substrate.

It belongs to the ribose 5-phosphate isomerase family. In terms of assembly, homodimer.

The enzyme catalyses aldehydo-D-ribose 5-phosphate = D-ribulose 5-phosphate. Its pathway is carbohydrate degradation; pentose phosphate pathway; D-ribose 5-phosphate from D-ribulose 5-phosphate (non-oxidative stage): step 1/1. Catalyzes the reversible conversion of ribose-5-phosphate to ribulose 5-phosphate. The polypeptide is Ribose-5-phosphate isomerase A (Methanosarcina acetivorans (strain ATCC 35395 / DSM 2834 / JCM 12185 / C2A)).